Here is a 254-residue protein sequence, read N- to C-terminus: 5'-nucleotidase SurE (254 aa).

D8, D9, S40, and N93 together coordinate a divalent metal cation.

Belongs to the SurE nucleotidase family. A divalent metal cation serves as cofactor.

It is found in the cytoplasm. The enzyme catalyses a ribonucleoside 5'-phosphate + H2O = a ribonucleoside + phosphate. In terms of biological role, nucleotidase that shows phosphatase activity on nucleoside 5'-monophosphates. This chain is 5'-nucleotidase SurE, found in Methylobacterium radiotolerans (strain ATCC 27329 / DSM 1819 / JCM 2831 / NBRC 15690 / NCIMB 10815 / 0-1).